The chain runs to 495 residues: NAD(+)--protein-arginine ADP-ribosyltransferase Tre1 (495 aa).

Residues 278–309 (PDLQIKGPTPVKKPEPLQPARQPEKASAPKPV) are disordered. Positions 315-495 (MSLREAVGNQ…VTQFILKEIP (181 aa)) constitute a TR mART core domain. The tract at residues 344–495 (RSALLTDDQI…VTQFILKEIP (152 aa)) is ART domain. Catalysis depends on residues R406, S431, and E466.

Belongs to the Arg-specific ADP-ribosyltransferase family.

The protein localises to the secreted. It is found in the host cytoplasm. The catalysed reaction is L-arginyl-[protein] + NAD(+) = N(omega)-(ADP-D-ribosyl)-L-arginyl-[protein] + nicotinamide + H(+). Toxic component of a contact-dependent interbacterial competition system (also called effector-immunity systems). Acts by ADP-ribosylating a number of target proteins in target cells; E.coli target proteins include FtsZ, EFTu, RNase E, Fis, YegQ, GuaB and IF2. This Pseudomonas putida (strain GB-1) protein is NAD(+)--protein-arginine ADP-ribosyltransferase Tre1.